Consider the following 492-residue polypeptide: Lysine--tRNA ligase (492 aa).

Residues Asp395 and Glu402 each coordinate Mg(2+).

The protein belongs to the class-II aminoacyl-tRNA synthetase family. Homodimer. Mg(2+) serves as cofactor.

It localises to the cytoplasm. The catalysed reaction is tRNA(Lys) + L-lysine + ATP = L-lysyl-tRNA(Lys) + AMP + diphosphate. The sequence is that of Lysine--tRNA ligase from Thermus thermophilus (strain ATCC BAA-163 / DSM 7039 / HB27).